A 223-amino-acid chain; its full sequence is Protein Wnt-1 (223 aa).

3 disulfide bridges follow: Cys-7-Cys-24, Cys-72-Cys-86, and Cys-74-Cys-81. Ser-78 carries O-palmitoleoyl serine; by PORCN lipidation. The segment at 110–135 (VTMRNDGSPSDRETESSFVPYNPSHK) is disordered. Residues 125-135 (SSFVPYNPSHK) are compositionally biased toward polar residues. Cystine bridges form between Cys-152–Cys-183, Cys-168–Cys-178, Cys-182–Cys-222, Cys-198–Cys-213, Cys-200–Cys-210, and Cys-205–Cys-206. An N-linked (GlcNAc...) asparagine glycan is attached at Asn-169.

The protein belongs to the Wnt family. In terms of processing, palmitoleoylation is required for efficient binding to frizzled receptors. Palmitoleoylation is necessary for proper trafficking to cell surface. Depalmitoleoylated by NOTUM, leading to inhibit Wnt signaling pathway.

Its subcellular location is the secreted. It is found in the extracellular space. It localises to the extracellular matrix. Its function is as follows. Ligand for members of the frizzled family of seven transmembrane receptors. Probable developmental protein. The protein is Protein Wnt-1 (WNT-1) of Strongylocentrotus purpuratus (Purple sea urchin).